The following is a 227-amino-acid chain: Cytochrome c oxidase subunit 2 (227 aa).

At 1-14 (MAYPMQLGLQDATS) the chain is on the mitochondrial intermembrane side. A helical membrane pass occupies residues 15-45 (PIMEELMNFHDHTLMIVFLISSLVLYLISLM). The Mitochondrial matrix portion of the chain corresponds to 46-59 (LTTKLIHTNTMDAQ). A helical membrane pass occupies residues 60–87 (EVETIWTILPAIILVLIALPSLRILYMM). Residues 88 to 227 (DEINNPVLTV…FFENWSSSMT (140 aa)) are Mitochondrial intermembrane-facing. Positions 161, 196, 198, 200, 204, and 207 each coordinate Cu cation. Glu-198 is a binding site for Mg(2+).

It belongs to the cytochrome c oxidase subunit 2 family. In terms of assembly, component of the cytochrome c oxidase (complex IV, CIV), a multisubunit enzyme composed of 14 subunits. The complex is composed of a catalytic core of 3 subunits MT-CO1, MT-CO2 and MT-CO3, encoded in the mitochondrial DNA, and 11 supernumerary subunits COX4I, COX5A, COX5B, COX6A, COX6B, COX6C, COX7A, COX7B, COX7C, COX8 and NDUFA4, which are encoded in the nuclear genome. The complex exists as a monomer or a dimer and forms supercomplexes (SCs) in the inner mitochondrial membrane with NADH-ubiquinone oxidoreductase (complex I, CI) and ubiquinol-cytochrome c oxidoreductase (cytochrome b-c1 complex, complex III, CIII), resulting in different assemblies (supercomplex SCI(1)III(2)IV(1) and megacomplex MCI(2)III(2)IV(2)). Found in a complex with TMEM177, COA6, COX18, COX20, SCO1 and SCO2. Interacts with TMEM177 in a COX20-dependent manner. Interacts with COX20. Interacts with COX16. The cofactor is Cu cation.

It is found in the mitochondrion inner membrane. It catalyses the reaction 4 Fe(II)-[cytochrome c] + O2 + 8 H(+)(in) = 4 Fe(III)-[cytochrome c] + 2 H2O + 4 H(+)(out). Functionally, component of the cytochrome c oxidase, the last enzyme in the mitochondrial electron transport chain which drives oxidative phosphorylation. The respiratory chain contains 3 multisubunit complexes succinate dehydrogenase (complex II, CII), ubiquinol-cytochrome c oxidoreductase (cytochrome b-c1 complex, complex III, CIII) and cytochrome c oxidase (complex IV, CIV), that cooperate to transfer electrons derived from NADH and succinate to molecular oxygen, creating an electrochemical gradient over the inner membrane that drives transmembrane transport and the ATP synthase. Cytochrome c oxidase is the component of the respiratory chain that catalyzes the reduction of oxygen to water. Electrons originating from reduced cytochrome c in the intermembrane space (IMS) are transferred via the dinuclear copper A center (CU(A)) of subunit 2 and heme A of subunit 1 to the active site in subunit 1, a binuclear center (BNC) formed by heme A3 and copper B (CU(B)). The BNC reduces molecular oxygen to 2 water molecules using 4 electrons from cytochrome c in the IMS and 4 protons from the mitochondrial matrix. The sequence is that of Cytochrome c oxidase subunit 2 (MT-CO2) from Desmodillus auricularis (Cape short-eared gerbil).